We begin with the raw amino-acid sequence, 413 residues long: cAMP-dependent protein kinase regulatory subunit (413 aa).

The segment at 1–145 (MADSSSFPGT…DSWTPPCHPK (145 aa)) is disordered. The segment at 24-161 (SPIQKISEEE…RLKTAVSNNF (138 aa)) is dimerization and phosphorylation. The span at 58–67 (GNSFNGDNGS) shows a compositional bias: low complexity. The span at 121–138 (TSVSAESLNPTSAGSDSW) shows a compositional bias: polar residues. Ser122 carries the post-translational modification Phosphoserine. 3',5'-cyclic AMP is bound by residues 162–291 (LFSH…FLEE), Glu240, Arg249, 294–413 (LLSS…PSPS), Glu361, and Arg370.

The protein belongs to the cAMP-dependent kinase regulatory chain family. Tetramer, composed of 2 regulatory (R) and 2 catalytic (C) subunits. In the presence of cAMP it dissociates into 2 active monomeric C subunits and an R dimer.

This Aspergillus fumigatus (strain ATCC MYA-4609 / CBS 101355 / FGSC A1100 / Af293) (Neosartorya fumigata) protein is cAMP-dependent protein kinase regulatory subunit (pkaR).